The chain runs to 66 residues: Toxin Boma6b (66 aa).

In terms of domain architecture, LCN-type CS-alpha/beta spans 2-64; that stretch reads RDAYIAQNYN…VPIKVEGKCH (63 aa). 4 disulfides stabilise this stretch: Cys-12–Cys-63, Cys-16–Cys-36, Cys-22–Cys-46, and Cys-26–Cys-48.

This sequence belongs to the long (4 C-C) scorpion toxin superfamily. Sodium channel inhibitor family. Alpha subfamily. Expressed by the venom gland.

Its subcellular location is the secreted. Its function is as follows. Alpha toxins bind voltage-independently at site-3 of sodium channels (Nav) and inhibit the inactivation of the activated channels, thereby blocking neuronal transmission. This chain is Toxin Boma6b, found in Buthus occitanus mardochei (Moroccan scorpion).